A 447-amino-acid chain; its full sequence is Argininosuccinate synthase (447 aa).

ATP is bound by residues Ala17–Ser25 and Ala43. Tyr99 lines the L-citrulline pocket. Residues Gly129 and Thr131 each coordinate ATP. Residues Thr131, Asn135, and Asp136 each contribute to the L-aspartate site. An L-citrulline-binding site is contributed by Asn135. Residue Asp136 coordinates ATP. The L-citrulline site is built by Arg139 and Ser192. Asp194 provides a ligand contact to ATP. The L-citrulline site is built by Thr201, Glu203, and Glu280.

Belongs to the argininosuccinate synthase family. Type 2 subfamily. As to quaternary structure, homotetramer.

The protein localises to the cytoplasm. The catalysed reaction is L-citrulline + L-aspartate + ATP = 2-(N(omega)-L-arginino)succinate + AMP + diphosphate + H(+). Its pathway is amino-acid biosynthesis; L-arginine biosynthesis; L-arginine from L-ornithine and carbamoyl phosphate: step 2/3. In Janthinobacterium sp. (strain Marseille) (Minibacterium massiliensis), this protein is Argininosuccinate synthase.